The following is a 282-amino-acid chain: Probable endonuclease 4 (282 aa).

9 residues coordinate Zn(2+): His-66, His-106, Glu-143, Asp-177, His-180, His-214, Asp-227, His-229, and Glu-259.

It belongs to the AP endonuclease 2 family. Zn(2+) serves as cofactor.

It carries out the reaction Endonucleolytic cleavage to 5'-phosphooligonucleotide end-products.. Endonuclease IV plays a role in DNA repair. It cleaves phosphodiester bonds at apurinic or apyrimidinic (AP) sites, generating a 3'-hydroxyl group and a 5'-terminal sugar phosphate. This Nitratidesulfovibrio vulgaris (strain DP4) (Desulfovibrio vulgaris) protein is Probable endonuclease 4.